A 437-amino-acid chain; its full sequence is Vacuolar cation/proton exchanger 2 (437 aa).

The tract at residues 1-29 is disordered; sequence MMGAEKAEGMEELELEEGGGSPSPSPMTA. The Cytoplasmic portion of the chain corresponds to 1–65; it reads MMGAEKAEGM…KWRRALTSVR (65 aa). Residues 66–86 traverse the membrane as a helical segment; the sequence is VVILQAKINVLLPFGPLAVML. At 87 to 88 the chain is on the extracellular side; that stretch reads HY. A helical membrane pass occupies residues 89–109; sequence LSANHQGWVFLFSLIGITPLA. Over 110-126 the chain is Cytoplasmic; the sequence is ERLGYATEQLALYTGPT. Residues 127–147 form a helical membrane-spanning segment; it reads IGGLLNATFGNATEMIISLYA. Positions 136–171 are cation selection; the sequence is GNATEMIISLYALKNGMIRVVQQSLLGSILSNMLLV. Residues 148-161 are Extracellular-facing; the sequence is LKNGMIRVVQQSLL. Residues 162–182 traverse the membrane as a helical segment; it reads GSILSNMLLVLGCAFFAGGLV. The Cytoplasmic segment spans residues 183-194; it reads HPSRDQVFNKAS. The chain crosses the membrane as a helical span at residues 195–215; the sequence is AVVNSGLLLMAVLGLMFPAVL. Over 216–228 the chain is Extracellular; sequence HFTHSEVQYGKSE. A helical membrane pass occupies residues 229–249; it reads VSLSRFSSCIMLVAYASYLFF. The Cytoplasmic segment spans residues 250-281; that stretch reads QLKSQRSLYSPIGEQEEEVTEDEEEEKEITQG. The chain crosses the membrane as a helical span at residues 282-302; it reads EAICWLFVLTIWISILSGYLV. Topologically, residues 303–310 are extracellular; that stretch reads DAIQGASE. Residues 311–331 form a helical membrane-spanning segment; the sequence is SLNMPVAFISVILLPIVGNAA. Positions 328-363 are cation selection; sequence GNAAEHASAIMFAMKDKLDITLGVAIGSSTQISMFV. At 332–352 the chain is on the cytoplasmic side; it reads EHASAIMFAMKDKLDITLGVA. A helical transmembrane segment spans residues 353-373; the sequence is IGSSTQISMFVIPFCVVIGWI. Over 374-379 the chain is Extracellular; the sequence is MGQQMD. Residues 380 to 400 traverse the membrane as a helical segment; that stretch reads LNFQLFETATLFITVLVVAFM. Topologically, residues 401–408 are cytoplasmic; it reads LQEGTSNY. A helical membrane pass occupies residues 409–429; the sequence is FKGLMLILCYLIVAASFFVHV. Over 430 to 437 the chain is Extracellular; sequence DPDSSNNK.

The protein belongs to the Ca(2+):cation antiporter (CaCA) (TC 2.A.19) family. Cation/proton exchanger (CAX) subfamily. In terms of tissue distribution, expressed in roots and shoots.

Its subcellular location is the vacuole membrane. Its function is as follows. Vacuolar cation/proton exchanger (CAX). Translocates Ca(2+) and other metal ions into vacuoles using the proton gradient formed by H(+)-ATPase and H(+)-pyrophosphatase. The chain is Vacuolar cation/proton exchanger 2 (CAX2) from Oryza sativa subsp. japonica (Rice).